Here is a 109-residue protein sequence, read N- to C-terminus: MSITDILSAEDIAAALQECQDPDTFEPQKFFQTSGLSKMSASQVKDIFRFIDNDQSGYLDGDELKYFLQKFQSDARELTESETKSLMDAADNDGDGKIGADEFQEMVHS.

N-acetylserine is present on Ser2. EF-hand domains lie at 39-74 (MSAS…FQSD) and 78-109 (LTES…MVHS). Residues Asp52, Asp54, Ser56, Tyr58, Glu63, Asp91, Asp93, Asp95, Lys97, and Glu102 each contribute to the Ca(2+) site.

This sequence belongs to the parvalbumin family. Found in tumor tissues and not detected in normal tissues.

Its function is as follows. Has some calmodulin-like activity with respect to enzyme activation and growth regulation. Binds two calcium ions. The polypeptide is Oncomodulin (Ocm) (Rattus norvegicus (Rat)).